Consider the following 94-residue polypeptide: Co-chaperonin GroES (94 aa).

It belongs to the GroES chaperonin family. In terms of assembly, heptamer of 7 subunits arranged in a ring. Interacts with the chaperonin GroEL.

It localises to the cytoplasm. In terms of biological role, together with the chaperonin GroEL, plays an essential role in assisting protein folding. The GroEL-GroES system forms a nano-cage that allows encapsulation of the non-native substrate proteins and provides a physical environment optimized to promote and accelerate protein folding. GroES binds to the apical surface of the GroEL ring, thereby capping the opening of the GroEL channel. The sequence is that of Co-chaperonin GroES from Bacillus licheniformis (strain ATCC 14580 / DSM 13 / JCM 2505 / CCUG 7422 / NBRC 12200 / NCIMB 9375 / NCTC 10341 / NRRL NRS-1264 / Gibson 46).